Consider the following 272-residue polypeptide: Alkaline ceramidase (272 aa).

The next 2 membrane-spanning stretches (helical) occupy residues 34 to 54 (FANTCTNLPIIVLPLVNIMLL) and 61 to 81 (VNGGLIFPQLLLTFNGLASTY). H83 contacts Zn(2+). Transmembrane regions (helical) follow at residues 96–116 (LSLVWIITVFLVVYIPVMKWF), 124–144 (LTLVRWVVLIVTALVSGLCFL), 148–168 (LNAIALMLFSIPAAVVINYEG), and 183–203 (ILALWGVAFSFWFADRLLCDF). H213 and H217 together coordinate Zn(2+). A helical transmembrane segment spans residues 214-234 (ALFHLLAGLAGYTIFIMFSMI). N-linked (GlcNAc...) asparagine glycosylation is present at N256.

It belongs to the alkaline ceramidase family. Zn(2+) is required as a cofactor.

Its subcellular location is the membrane. The enzyme catalyses an N-acyl-sphingoid base + H2O = a sphingoid base + a fatty acid. It catalyses the reaction an N-acylsphing-4-enine + H2O = sphing-4-enine + a fatty acid. It carries out the reaction an N-acyl-15-methylhexadecasphing-4-enine + H2O = 15-methylhexadecasphing-4-enine + a fatty acid. It functions in the pathway lipid metabolism; sphingolipid metabolism. In terms of biological role, hydrolyzes the sphingolipid ceramide into sphingoid base and free fatty acid. C.elegans contain specific sphingoid bases, which are unique or different in structure compared to the sphingoid bases found in other animals. Two examples of these distinctive compounds are: 15-methylhexadecasphinganine and 15-methylhexadecasphing-4-enine. The chain is Alkaline ceramidase from Caenorhabditis elegans.